We begin with the raw amino-acid sequence, 96 residues long: Co-chaperonin GroES (96 aa).

It belongs to the GroES chaperonin family. As to quaternary structure, heptamer of 7 subunits arranged in a ring. Interacts with the chaperonin GroEL.

Its subcellular location is the cytoplasm. In terms of biological role, together with the chaperonin GroEL, plays an essential role in assisting protein folding. The GroEL-GroES system forms a nano-cage that allows encapsulation of the non-native substrate proteins and provides a physical environment optimized to promote and accelerate protein folding. GroES binds to the apical surface of the GroEL ring, thereby capping the opening of the GroEL channel. The polypeptide is Co-chaperonin GroES (Herminiimonas arsenicoxydans).